The sequence spans 292 residues: MEGIPLIDIYGKQWKIDKLIGCGGFGCVYSTQCASNTRQAVIKVESLNNTTMVSEVLVYNNIYDKNRIALWKNYKNIDHLGIPMYYGCGSFKRNTMYYRFILLERLVENTKELLKRVKKPKPLIKNIMKDMLYTLEYIHEHGISHGDIKPENIMVDGRYRSYLIDYGIVSYFIVNGKHVKYYKESKNWHRGTLYYASLDAHNGTCVTRRGDLESLGYCMLKWAGIPLPWKVFGNNGNMVHVAKCDFIKRVHKNKVNIKSANKGIYDYIKCVTKLSYEEKPDYDLLRQLVNSL.

Residues 14 to 292 (WKIDKLIGCG…DLLRQLVNSL (279 aa)) enclose the Protein kinase domain. Residues 20 to 28 (IGCGGFGCV) and K43 each bind ATP. The active-site Proton acceptor is D147.

This sequence belongs to the protein kinase superfamily. Ser/Thr protein kinase family. Poxviruses subfamily.

It carries out the reaction L-seryl-[protein] + ATP = O-phospho-L-seryl-[protein] + ADP + H(+). It catalyses the reaction L-threonyl-[protein] + ATP = O-phospho-L-threonyl-[protein] + ADP + H(+). This Vertebrata (FPV) protein is Probable serine/threonine-protein kinase FPV226.